The primary structure comprises 411 residues: Adenylosuccinate synthetase (411 aa).

GTP contacts are provided by residues 11 to 17 (GDEGKGK) and 39 to 41 (GHT). Aspartate 12 acts as the Proton acceptor in catalysis. Positions 12 and 39 each coordinate Mg(2+). IMP-binding positions include 12–15 (DEGK), 37–40 (NAGH), threonine 121, arginine 135, glutamine 215, threonine 230, and arginine 294. The active-site Proton donor is the histidine 40. 290 to 296 (TTTKRPR) provides a ligand contact to substrate. Residues arginine 296, 322–324 (KLD), and 400–402 (STS) each bind GTP.

The protein belongs to the adenylosuccinate synthetase family. Homodimer. The cofactor is Mg(2+).

It localises to the cytoplasm. It catalyses the reaction IMP + L-aspartate + GTP = N(6)-(1,2-dicarboxyethyl)-AMP + GDP + phosphate + 2 H(+). It participates in purine metabolism; AMP biosynthesis via de novo pathway; AMP from IMP: step 1/2. Functionally, plays an important role in the de novo pathway of purine nucleotide biosynthesis. Catalyzes the first committed step in the biosynthesis of AMP from IMP. The polypeptide is Adenylosuccinate synthetase (Helicobacter pylori (strain Shi470)).